A 320-amino-acid chain; its full sequence is Methionyl-tRNA formyltransferase (320 aa).

Residue 114–117 (SLLP) participates in (6S)-5,6,7,8-tetrahydrofolate binding.

Belongs to the Fmt family.

It carries out the reaction L-methionyl-tRNA(fMet) + (6R)-10-formyltetrahydrofolate = N-formyl-L-methionyl-tRNA(fMet) + (6S)-5,6,7,8-tetrahydrofolate + H(+). Functionally, attaches a formyl group to the free amino group of methionyl-tRNA(fMet). The formyl group appears to play a dual role in the initiator identity of N-formylmethionyl-tRNA by promoting its recognition by IF2 and preventing the misappropriation of this tRNA by the elongation apparatus. This is Methionyl-tRNA formyltransferase from Acinetobacter baumannii (strain SDF).